Consider the following 330-residue polypeptide: Syntaxin-121 (330 aa).

Over residues 1 to 10 (MNNLFSSSWK) the composition is skewed to polar residues. The disordered stretch occupies residues 1–39 (MNNLFSSSWKRTGGGGGGDGDIESGGGVEMAPPPGAAAG). At 1-284 (MNNLFSSSWK…RKHQKSTRKW (284 aa)) the chain is on the cytoplasmic side. Residues 12-28 (TGGGGGGDGDIESGGGV) are compositionally biased toward gly residues. The t-SNARE coiled-coil homology domain maps to 212-274 (VAEIQERHGA…DRGREQLVVA (63 aa)). A helical; Anchor for type IV membrane protein transmembrane segment spans residues 285 to 305 (TCIAIIILLVLILVVVLPIVL). Topologically, residues 306 to 330 (KFVNNNKSSSSSPAPATPSPPPPTA) are vesicular. The interval 311-330 (NKSSSSSPAPATPSPPPPTA) is disordered. Pro residues predominate over residues 320 to 330 (PATPSPPPPTA).

This sequence belongs to the syntaxin family. In terms of assembly, interacts with SNAP32. As to expression, expressed in roots, stems, leaf blades and leaf sheaths.

The protein resides in the cell membrane. Vesicle trafficking protein that functions in the secretory pathway. Involved in plant defense by mediating host resistance to the rice blast fungus Magnaporthe oryzae. The interaction with SNAP32 may contribute to host resistance to the rice blast fungus. This chain is Syntaxin-121, found in Oryza sativa subsp. japonica (Rice).